The chain runs to 397 residues: Succinate--CoA ligase [ADP-forming] subunit beta (397 aa).

The ATP-grasp domain maps to 9–254; sequence KALLAQYGAP…ETEEDPKELA (246 aa). Residues lysine 46, 53 to 55, glutamate 109, serine 112, and glutamate 117 each bind ATP; that span reads GRG. Residues asparagine 209 and aspartate 223 each contribute to the Mg(2+) site. Residues asparagine 274 and 331-333 contribute to the substrate site; that span reads GIM.

This sequence belongs to the succinate/malate CoA ligase beta subunit family. As to quaternary structure, heterotetramer of two alpha and two beta subunits. It depends on Mg(2+) as a cofactor.

It carries out the reaction succinate + ATP + CoA = succinyl-CoA + ADP + phosphate. The enzyme catalyses GTP + succinate + CoA = succinyl-CoA + GDP + phosphate. Its pathway is carbohydrate metabolism; tricarboxylic acid cycle; succinate from succinyl-CoA (ligase route): step 1/1. In terms of biological role, succinyl-CoA synthetase functions in the citric acid cycle (TCA), coupling the hydrolysis of succinyl-CoA to the synthesis of either ATP or GTP and thus represents the only step of substrate-level phosphorylation in the TCA. The beta subunit provides nucleotide specificity of the enzyme and binds the substrate succinate, while the binding sites for coenzyme A and phosphate are found in the alpha subunit. The sequence is that of Succinate--CoA ligase [ADP-forming] subunit beta from Jannaschia sp. (strain CCS1).